Consider the following 947-residue polypeptide: MDRITDFYFLDFRESVKTLIITGNSWRLQEMIDRFFTNISNFNRESLTEIQNIQIEEIAVNLWNWAVTKRVELSVRKNQAAKLCYIACKLVYMHGISVSSEEAIQRQILMNIKTGKEWLYTGNAQIADEFFQAAMTDLERLYVRLMQSCYTEANVCVYKMIVEKGIFHVLSYQAESAVAQGDFKKASMCVLRCKDMLMRLPNMTKYLHVLCYNLGIEASKRNKYKESSFWLGQSYEIGKMDRRSVEPQMLAKTLRLLATIYLNCGGEAYYTKAFIAILIANKEHLHPAGLFLKMRILMKGNSCNEELLEAAKEILYLAMPLEFYLSIIQFLIDNKRESVGFRFLRIISDNFKSPEDRKRILLFYIDTLLQKDQDMIAEEKIKDVLKGYQTRSRLSRDLVNWLHNILWGKASRSVKVQKYADALHWYSYSLKLYEYDKADLDLIKLKRNMVSCYLSLKQLDKAKEAIAEVEQKDPTHVFTRYYIFKIAIMEGDAFRALQVVSALKKSLMDGESEDRGLIEAGVSTLTILSLSIDFALENGQQFVAERALEYLCQLSKDPKEVLGGLKCLMRIILPQAFHMPESEYKKKEMGRLWNYLNTALLKFSEYFNEAPSTLDYMVNDANWFRKIAWNLAVQSEKDLEAMKNFFMVSYKLSLFCPLDQGLLIAQKTCLLVAAAVDLDRGRKAPTICEQNMLLRTALEQIKKCKKVWNLLKKTGDFSGDDCGVLLLLYEFEVKTKTNDPSLSRFVDSVWKMPDLECRTLETMALLAMDKPAYYPTIAHKAMKKLLLMYRKQEPVDVLKYSVCMHNLIKLLVADEVWNISLYPLKEVQSHFKNTLSIIRQNEGYPEEEIVWLMIKSWNIGILMSSKNKYISAERWAAMALDFLGHLSTLKTSYEAKVNLLYANLMEILDKKTDLRSTEMTEQLRALIVPPEDQGSVSSTNVAAQNHL.

The protein belongs to the SPO22 family. As to quaternary structure, interacts with SYCP2. Interacts with PBXIP1; may prevent interaction between PBXIP1 and ESR2. Interacts with SHOC1. Interacts with REDIC1. In terms of tissue distribution, testis-specific.

It is found in the chromosome. Its function is as follows. Regulator of crossing-over during meiosis. Involved in initiation and/or maintenance of chromosome synapsis and formation of crossovers. The sequence is that of Testis-expressed protein 11 (Tex11) from Mus musculus (Mouse).